The primary structure comprises 207 residues: Cytochrome c biogenesis ATP-binding export protein CcmA (207 aa).

The ABC transporter domain occupies 2–204 (LEVKNLTAIR…NPKLRKIRLG (203 aa)). 34-41 (GRNGTGKT) contributes to the ATP binding site.

This sequence belongs to the ABC transporter superfamily. CcmA exporter (TC 3.A.1.107) family. As to quaternary structure, the complex is composed of two ATP-binding proteins (CcmA) and two transmembrane proteins (CcmB).

Its subcellular location is the cell inner membrane. It catalyses the reaction heme b(in) + ATP + H2O = heme b(out) + ADP + phosphate + H(+). In terms of biological role, part of the ABC transporter complex CcmAB involved in the biogenesis of c-type cytochromes; once thought to export heme, this seems not to be the case, but its exact role is uncertain. Responsible for energy coupling to the transport system. This chain is Cytochrome c biogenesis ATP-binding export protein CcmA, found in Vibrio cholerae serotype O1 (strain ATCC 39315 / El Tor Inaba N16961).